A 1068-amino-acid polypeptide reads, in one-letter code: Huntingtin-interacting protein 1-related protein (1068 aa).

Position 1 is an N-acetylmethionine (methionine 1). Positions 23–151 constitute an ENTH domain; sequence EREQFDKTQA…SFHLKHPQFP (129 aa). Positions 347 to 599 form a coiled coil; the sequence is SVKDDRDLQI…RSSQEQGELQ (253 aa). 3 disordered regions span residues 424 to 443, 529 to 549, and 582 to 608; these read LEGE…ASAT, ARAQ…SSRL, and AALS…RESQ. 2 stretches are compositionally biased toward basic and acidic residues: residues 425-443 and 539-549; these read EGER…ASAT and EQSKSELSSRL. Over residues 590–600 the composition is skewed to low complexity; sequence RSSQEQGELQG. One can recognise an I/LWEQ domain in the interval 771–1012; the sequence is SLDVRQEELG…ELRKQHYVLA (242 aa). Residues 867–924 are important for actin binding; sequence RWTEGLISASKAVGWGATQLVEAADKVVLHTGKYEELIVCSHEIAASTAQLVAASKVK. A disordered region spans residues 1016-1060; sequence GSPGEEVAIRPSTAPRSVTTKKPPLAQKPSVAPRQDHQLDKKDGI. Serine 1017 carries the post-translational modification Phosphoserine. The segment covering 1049–1059 has biased composition (basic and acidic residues); the sequence is RQDHQLDKKDG.

Belongs to the SLA2 family. Homodimer. Interacts with actin; homodimerization promotes actin binding. Interacts with CLTB. Interacts with HIP1. Interacts (via ENTH and I/LWEQ domains) with BCL2L10. In terms of tissue distribution, brain, heart, kidney, pancreas, and liver, but not in lung or placenta.

The protein resides in the cytoplasm. It localises to the perinuclear region. Its subcellular location is the endomembrane system. The protein localises to the cytoplasmic vesicle. It is found in the clathrin-coated vesicle membrane. Functionally, component of clathrin-coated pits and vesicles, that may link the endocytic machinery to the actin cytoskeleton. Binds 3-phosphoinositides (via ENTH domain). May act through the ENTH domain to promote cell survival by stabilizing receptor tyrosine kinases following ligand-induced endocytosis. This is Huntingtin-interacting protein 1-related protein (HIP1R) from Homo sapiens (Human).